Consider the following 238-residue polypeptide: 7-cyano-7-deazaguanine synthase (238 aa).

12–22 contributes to the ATP binding site; that stretch reads FSGGQDSTTCL. Cys191, Cys200, Cys203, and Cys206 together coordinate Zn(2+).

This sequence belongs to the QueC family. Zn(2+) is required as a cofactor.

It catalyses the reaction 7-carboxy-7-deazaguanine + NH4(+) + ATP = 7-cyano-7-deazaguanine + ADP + phosphate + H2O + H(+). The protein operates within purine metabolism; 7-cyano-7-deazaguanine biosynthesis. In terms of biological role, catalyzes the ATP-dependent conversion of 7-carboxy-7-deazaguanine (CDG) to 7-cyano-7-deazaguanine (preQ(0)). The polypeptide is 7-cyano-7-deazaguanine synthase (Shewanella oneidensis (strain ATCC 700550 / JCM 31522 / CIP 106686 / LMG 19005 / NCIMB 14063 / MR-1)).